The following is a 99-amino-acid chain: C-C motif chemokine 17 (99 aa).

A signal peptide spans 1 to 23 (MIPLKMLLLVTLLLGASLQVTHA). Intrachain disulfides connect cysteine 33–cysteine 57 and cysteine 34–cysteine 73.

It belongs to the intercrine beta (chemokine CC) family. In terms of tissue distribution, expressed in thymus, spleen, lymph node, lung and heart.

It localises to the secreted. Functionally, chemokine, which displays chemotactic activity for T lymphocytes, preferentially Th2 cells, but not monocytes or granulocytes. Therefore plays an important role in a wide range of inflammatory and immunological processes. Acts by binding to CCR4 at T-cell surface. Mediates GM-CSF/CSF2-driven pain and inflammation. In the brain, required to maintain the typical, highly branched morphology of hippocampal microglia under homeostatic conditions. May be important for the appropriate adaptation of microglial morphology and synaptic plasticity to acute lipopolysaccharide (LPS)-induced neuroinflammation. Plays a role in wound healing, mainly by inducing fibroblast migration into the wound. In Canis lupus familiaris (Dog), this protein is C-C motif chemokine 17 (CCL17).